Here is a 755-residue protein sequence, read N- to C-terminus: DNA ligase 1 (755 aa).

The N-terminal 44 residues, 1 to 44 (MRRLLTGCLLSSARPLKSRLPLLMSSSLPSSAGKKPKQATLARF), are a transit peptide targeting the mitochondrion. Residue Arg-2 is modified to N-acetylserine. A compositionally biased stretch (polar residues) spans 47-60 (SMKNKPTEGTPSPK). Disordered regions lie at residues 47–79 (SMKN…GEEE) and 97–127 (PSSM…QRLV). 2 positions are modified to phosphoserine: Ser-58 and Ser-75. Over residues 102–114 (SNFSSIPSSAPSS) the composition is skewed to low complexity. Phosphoserine is present on residues Ser-119 and Ser-123. Positions 309 to 318 (KLRIGLAEKT) are interaction with target DNA. Glu-417 provides a ligand contact to ATP. The active-site N6-AMP-lysine intermediate is the Lys-419. ATP is bound by residues Arg-424 and Arg-440. Glu-472 lines the Mg(2+) pocket. Positions 493–495 (KRK) are interaction with target DNA. Glu-571 lines the Mg(2+) pocket. 3 residues coordinate ATP: Lys-576, Arg-590, and Lys-596.

The protein belongs to the ATP-dependent DNA ligase family. Requires Mg(2+) as cofactor.

It is found in the mitochondrion. The protein localises to the nucleus. It catalyses the reaction ATP + (deoxyribonucleotide)n-3'-hydroxyl + 5'-phospho-(deoxyribonucleotide)m = (deoxyribonucleotide)n+m + AMP + diphosphate.. DNA ligase that seals nicks in double-stranded DNA during DNA replication, DNA recombination and DNA repair. The mitochondrial form is required for mitochondrial DNA maintenance but is non-essential while the nuclear form is essential for cell viability. The protein is DNA ligase 1 (CDC9) of Saccharomyces cerevisiae (strain ATCC 204508 / S288c) (Baker's yeast).